The primary structure comprises 304 residues: E3 ubiquitin-protein ligase CHIP (304 aa).

Basic and acidic residues predominate over residues 1–10 (MKGKEEKEGG). The disordered stretch occupies residues 1 to 30 (MKGKEEKEGGARLGTGGGGSPDKSPSAQEL). Lys2 participates in a covalent cross-link: Glycyl lysine isopeptide (Lys-Gly) (interchain with G-Cter in ubiquitin). Over residues 11–20 (ARLGTGGGGS) the composition is skewed to gly residues. Ser20 carries the phosphoserine modification. Residue Lys23 forms a Glycyl lysine isopeptide (Lys-Gly) (interchain with G-Cter in ubiquitin) linkage. A phosphoserine mark is found at Ser24 and Ser26. 3 TPR repeats span residues 27–60 (AQEL…NPLV), 61–94 (AVYY…DGQS), and 96–128 (KAHF…AKEQ). Residues 102-201 (GQCQLEMESY…GHIRAQQACI (100 aa)) are required for interaction with MAPK7. A required for interaction with and ubiquitination of MYOCD region spans residues 143 to 197 (AKKKRWNSIEERRIHQESELHSYLTRLIAAERERELEECQRNHEGDEDDGHIRAQ). Positions 144–198 (KKKRWNSIEERRIHQESELHSYLTRLIAAERERELEECQRNHEGDEDDGHIRAQQ) are required for interaction with FOXO1. Residues 144-304 (KKKRWNSIEE…ISENGWVEDY (161 aa)) form a required for ubiquitination of FOXO1 region. Ser150 carries the post-translational modification Phosphoserine. Glycyl lysine isopeptide (Lys-Gly) (interchain with G-Cter in ubiquitin) cross-links involve residues Lys222 and Lys256. Residues 227 to 301 (DIPDYLCGKI…DAFISENGWV (75 aa)) form the U-box domain. Position 274 is a phosphoserine (Ser274).

Homodimer. Interacts with BAG2, and with the E2 ubiquitin conjugating enzymes UBE2D1, UBE2D2 and UBE2D3. Detected in a ternary complex containing STUB1, HSPA1A and HSPBP1. Part of a complex composed of STUB1/CHIP, VCP/p97, CHRNA3, and UBXN2A that modulates the ubiquitination and endoplasmic reticulum-associated degradation (ERAD) of CHRNA3. Within the complex UBXN2A acts as a scaffold protein required for the interaction of CHRNA3 with VCP/p97, this interaction also inhibits CHRNA3 ubiquitination by STUB1/CHIP and subsequently ERAD. Interacts with MKKS. Interacts with DNAAF4. Interacts (via the U-box domain) with the UBE2V2-UBE2N heterodimer; the complex has a specific 'Lys-63'-linked polyubiquitination activity. Interacts (when monoubiquitinated) with ATXN3. Interacts with UBE2W. Interacts with DNAJB6. Interacts with FLCN and HSP90AA1. Interacts with HSP90. Interacts with UBE2N and UBE2V1. Interacts (via TPR repeats) with HSPA8 (via C-terminus). Interacts (via TPR repeats) with HSPA1A (via C-terminus). Interacts with the non-acetylated form of HSPA1A and HSPA1B. Interacts with SMAD3 and HSP90AB1. Interacts with UBE4B. Interacts with PRMT5. Interacts with MYOCD (via C-terminus). Interacts with FOXO1 (when phosphorylated on 'Ser-250'). Interacts with MAPK7/ERK5; the interaction is enhanced in the presence of IGF1 or MAP2K5 and promotes STUB1/CHIP E3 ligase activity. Interacts with and ubiquitinates ESR1; the interaction is promoted in the absence of estradiol (17-beta-estradiol/E2). Interacts with ESR2. Interacts with and ubiquitinates NFATC3; HSPA1A/HSP70 is required as a co-chaperone. In macrophages, interacts with PAQR3; the interaction promotes PPARG poylubiquitination and STUB1-mediated degradation. Component of the chaperone-assisted selective autophagy (CASA) complex consisting of BAG3, HSPA8/HSC70, HSPB8 and STUB1/CHIP. Auto-ubiquitinated; mediated by UBE2D1 and UBE2D2 and enhanced in the presence of MAP2K5. Monoubiquitinated at Lys-2 following cell stress by UBE2W, promoting the interaction with ATXN3. Expressed in the adventitia layer of the carotid artery (at protein level). Expressed in the CA1 region of the hippocampus (at protein level). Expressed in the uterus (at protein level).

It localises to the cytoplasm. Its subcellular location is the nucleus. It is found in the mitochondrion. The catalysed reaction is S-ubiquitinyl-[E2 ubiquitin-conjugating enzyme]-L-cysteine + [acceptor protein]-L-lysine = [E2 ubiquitin-conjugating enzyme]-L-cysteine + N(6)-ubiquitinyl-[acceptor protein]-L-lysine.. It participates in protein modification; protein ubiquitination. In terms of biological role, E3 ubiquitin-protein ligase which targets misfolded chaperone substrates towards proteasomal degradation. Plays a role in the maintenance of mitochondrial morphology and promotes mitophagic removal of dysfunctional mitochondria; thereby acts as a protector against apoptosis in response to cellular stress. Negatively regulates vascular smooth muscle contraction, via degradation of the transcriptional activator MYOCD and subsequent loss of transcription of genes involved in vascular smooth muscle contraction. Promotes survival and proliferation of cardiac smooth muscle cells via ubiquitination and degradation of FOXO1, resulting in subsequent repression of FOXO1-mediated transcription of pro-apoptotic genes. Ubiquitinates ICER-type isoforms of CREM and targets them for proteasomal degradation, thereby acts as a positive effector of MAPK/ERK-mediated inhibition of apoptosis in cardiomyocytes. Inhibits lipopolysaccharide-induced apoptosis and hypertrophy in cardiomyocytes, via ubiquitination and subsequent proteasomal degradation of NFATC3. Collaborates with ATXN3 in the degradation of misfolded chaperone substrates: ATXN3 restricting the length of ubiquitin chain attached to STUB1/CHIP substrates and preventing further chain extension. Ubiquitinates NOS1 in concert with Hsp70 and Hsp40. Modulates the activity of several chaperone complexes, including Hsp70, Hsc70 and Hsp90. Ubiquitinates CHRNA3 targeting it for endoplasmic reticulum-associated degradation in cortical neurons, as part of the STUB1-VCP-UBXN2A complex. Ubiquitinates and promotes ESR1 proteasomal degradation in response to age-related circulating estradiol (17-beta-estradiol/E2) decline, thereby promotes neuronal apoptosis in response to ischemic reperfusion injury. Mediates transfer of non-canonical short ubiquitin chains to HSPA8 that have no effect on HSPA8 degradation. Mediates polyubiquitination of DNA polymerase beta (POLB) at 'Lys-41', 'Lys-61' and 'Lys-81', thereby playing a role in base-excision repair: catalyzes polyubiquitination by amplifying the HUWE1/ARF-BP1-dependent monoubiquitination and leading to POLB-degradation by the proteasome. Mediates polyubiquitination of CYP3A4. Ubiquitinates EPHA2 and may regulate the receptor stability and activity through proteasomal degradation. Acts as a co-chaperone for HSPA1A and HSPA1B chaperone proteins and promotes ubiquitin-mediated protein degradation. Negatively regulates the suppressive function of regulatory T-cells (Treg) during inflammation by mediating the ubiquitination and degradation of FOXP3 in a HSPA1A/B-dependent manner. Catalyzes monoubiquitination of SIRT6, preventing its degradation by the proteasome. Likely mediates polyubiquitination and down-regulates plasma membrane expression of PD-L1/CD274, an immune inhibitory ligand critical for immune tolerance to self and antitumor immunity. Negatively regulates TGF-beta signaling by modulating the basal level of SMAD3 via ubiquitin-mediated degradation. Plays a role in the degradation of TP53. Mediates ubiquitination of RIPK3 leading to its subsequent proteasome-dependent degradation. May regulate myosin assembly in striated muscles together with UBE4B and VCP/p97 by targeting myosin chaperone UNC45B for proteasomal degradation. Ubiquitinates PPARG in macrophages playing a role in M2 macrophages polarization and angiogenesis. This chain is E3 ubiquitin-protein ligase CHIP, found in Rattus norvegicus (Rat).